Here is a 224-residue protein sequence, read N- to C-terminus: uncharacterized protein (224 aa).

A signal peptide spans 1-21 (MKRTSRSLTAALLGIAALLAG). A lipid anchor (N-palmitoyl cysteine) is attached at Cys-22. The S-diacylglycerol cysteine moiety is linked to residue Cys-22.

It to M.bovis LprP.

The protein resides in the cell membrane. This is an uncharacterized protein from Mycobacterium tuberculosis (strain ATCC 25618 / H37Rv).